The sequence spans 761 residues: NADP-dependent malic enzyme (761 aa).

Residues 1-437 (MPGIDKTDRA…QLSARRDPIA (437 aa)) are malic enzyme. The active-site Proton donor is Y49. The Proton acceptor role is filled by K104. Positions 146, 147, and 172 each coordinate a divalent metal cation. Residues 205-208 (AGAA), N297, and N329 each bind NADP(+). The segment at 438–761 (STLQRIVERV…AAIAAYNAGT (324 aa)) is phosphate acetyltransferase.

This sequence in the N-terminal section; belongs to the malic enzymes family. It in the C-terminal section; belongs to the phosphate acetyltransferase and butyryltransferase family. As to quaternary structure, homooctamer. The cofactor is Mg(2+). It depends on Mn(2+) as a cofactor.

The enzyme catalyses (S)-malate + NADP(+) = pyruvate + CO2 + NADPH. The catalysed reaction is oxaloacetate + H(+) = pyruvate + CO2. In Rhizobium meliloti (strain 1021) (Ensifer meliloti), this protein is NADP-dependent malic enzyme (tme).